The sequence spans 313 residues: D-beta-D-heptose 7-phosphate kinase (313 aa).

An ATP-binding site is contributed by 196-199 (NRAE). The active site involves aspartate 264.

The catalysed reaction is D-glycero-beta-D-manno-heptose 7-phosphate + ATP = D-glycero-beta-D-manno-heptose 1,7-bisphosphate + ADP + H(+). The protein operates within nucleotide-sugar biosynthesis; ADP-L-glycero-beta-D-manno-heptose biosynthesis; ADP-L-glycero-beta-D-manno-heptose from D-glycero-beta-D-manno-heptose 7-phosphate: step 1/4. It participates in bacterial outer membrane biogenesis; LPS core biosynthesis. Functionally, catalyzes the phosphorylation of D-glycero-D-manno-heptose 7-phosphate at the C-1 position to selectively form D-glycero-beta-D-manno-heptose-1,7-bisphosphate. In Bordetella bronchiseptica (strain ATCC BAA-588 / NCTC 13252 / RB50) (Alcaligenes bronchisepticus), this protein is D-beta-D-heptose 7-phosphate kinase (rfaE).